Consider the following 386-residue polypeptide: Ovalbumin (386 aa).

Glycine 2 carries the post-translational modification N-acetylglycine. A Phosphoserine modification is found at serine 69. A disulfide bond links cysteine 74 and cysteine 121. N-linked (GlcNAc...) asparagine glycosylation occurs at asparagine 293. Serine 345 is subject to Phosphoserine.

It belongs to the serpin family. Ov-serpin subfamily. The N-terminus is blocked.

It localises to the secreted. Functionally, storage protein of egg white. Lacks protease inhibitory activity. This chain is Ovalbumin (SERPINB14), found in Dromaius novaehollandiae (Emu).